We begin with the raw amino-acid sequence, 332 residues long: L-lactate dehydrogenase A chain (332 aa).

NAD(+)-binding positions include 29 to 57 (GAVG…IEDK) and Arg-99. Substrate contacts are provided by Arg-106, Asn-138, and Arg-169. Position 138 (Asn-138) interacts with NAD(+). Residue His-193 is the Proton acceptor of the active site. Thr-248 lines the substrate pocket.

It belongs to the LDH/MDH superfamily. LDH family. As to quaternary structure, homotetramer.

It is found in the cytoplasm. The enzyme catalyses (S)-lactate + NAD(+) = pyruvate + NADH + H(+). It participates in fermentation; pyruvate fermentation to lactate; (S)-lactate from pyruvate: step 1/1. Functionally, interconverts simultaneously and stereospecifically pyruvate and lactate with concomitant interconversion of NADH and NAD(+). The chain is L-lactate dehydrogenase A chain (LDHA) from Sceloporus woodi (Florida scrub lizard).